The sequence spans 294 residues: Glycine--tRNA ligase alpha subunit (294 aa).

This sequence belongs to the class-II aminoacyl-tRNA synthetase family. In terms of assembly, tetramer of two alpha and two beta subunits.

It is found in the cytoplasm. The catalysed reaction is tRNA(Gly) + glycine + ATP = glycyl-tRNA(Gly) + AMP + diphosphate. The chain is Glycine--tRNA ligase alpha subunit from Natranaerobius thermophilus (strain ATCC BAA-1301 / DSM 18059 / JW/NM-WN-LF).